The chain runs to 1588 residues: Pentafunctional AROM polypeptide (1588 aa).

Residues 1-392 form a 3-dehydroquinate synthase region; sequence MVQLAKVPIL…YGDSAQFVSD (392 aa). Residues 43-45, 78-81, 109-111, and aspartate 114 contribute to the NAD(+) site; these read DTN, ETSK, and GGV. 7-phospho-2-dehydro-3-deoxy-D-arabino-heptonate is bound at residue arginine 125. 134–135 serves as a coordination point for NAD(+); that stretch reads TS. Aspartate 141 and lysine 147 together coordinate 7-phospho-2-dehydro-3-deoxy-D-arabino-heptonate. Lysine 156 is a binding site for NAD(+). Asparagine 157 is a binding site for 7-phospho-2-dehydro-3-deoxy-D-arabino-heptonate. Residues 174–177 and asparagine 185 contribute to the NAD(+) site; that span reads WLET. Position 189 (glutamate 189) interacts with Zn(2+). Residues 189–192 and lysine 258 each bind 7-phospho-2-dehydro-3-deoxy-D-arabino-heptonate; that span reads EVIK. Residue glutamate 268 is the Proton acceptor; for 3-dehydroquinate synthase activity of the active site. 7-phospho-2-dehydro-3-deoxy-D-arabino-heptonate is bound by residues 272-276 and histidine 279; that span reads RNLLN. Residue histidine 279 coordinates Zn(2+). Catalysis depends on histidine 283, which acts as the Proton acceptor; for 3-dehydroquinate synthase activity. Residues histidine 295 and lysine 364 each contribute to the 7-phospho-2-dehydro-3-deoxy-D-arabino-heptonate site. Histidine 295 is a Zn(2+) binding site. Residues 405–871 are EPSP synthase; that stretch reads VYPFKDIPAD…WDVLHSELGA (467 aa). Cysteine 853 serves as the catalytic For EPSP synthase activity. The interval 890 to 1080 is shikimate kinase; that stretch reads SVVIIGMRAA…IPSGRSAFVC (191 aa). 895-902 provides a ligand contact to ATP; it reads GMRAAGKT. The tract at residues 1081–1293 is 3-dehydroquinase; the sequence is LTFDDLTEQT…AAPGQLTVAQ (213 aa). Residue histidine 1198 is the Proton acceptor; for 3-dehydroquinate dehydratase activity of the active site. Lysine 1227 (schiff-base intermediate with substrate; for 3-dehydroquinate dehydratase activity) is an active-site residue. The segment at 1306 to 1588 is shikimate dehydrogenase; that stretch reads PKELFVVGKP…KAIFDAVTKE (283 aa).

In the N-terminal section; belongs to the sugar phosphate cyclases superfamily. Dehydroquinate synthase family. This sequence in the 2nd section; belongs to the EPSP synthase family. The protein in the 3rd section; belongs to the shikimate kinase family. It in the 4th section; belongs to the type-I 3-dehydroquinase family. In the C-terminal section; belongs to the shikimate dehydrogenase family. Homodimer. The cofactor is Zn(2+).

Its subcellular location is the cytoplasm. The catalysed reaction is 7-phospho-2-dehydro-3-deoxy-D-arabino-heptonate = 3-dehydroquinate + phosphate. It carries out the reaction 3-dehydroquinate = 3-dehydroshikimate + H2O. It catalyses the reaction shikimate + NADP(+) = 3-dehydroshikimate + NADPH + H(+). The enzyme catalyses shikimate + ATP = 3-phosphoshikimate + ADP + H(+). The catalysed reaction is 3-phosphoshikimate + phosphoenolpyruvate = 5-O-(1-carboxyvinyl)-3-phosphoshikimate + phosphate. It participates in metabolic intermediate biosynthesis; chorismate biosynthesis; chorismate from D-erythrose 4-phosphate and phosphoenolpyruvate: step 2/7. The protein operates within metabolic intermediate biosynthesis; chorismate biosynthesis; chorismate from D-erythrose 4-phosphate and phosphoenolpyruvate: step 3/7. Its pathway is metabolic intermediate biosynthesis; chorismate biosynthesis; chorismate from D-erythrose 4-phosphate and phosphoenolpyruvate: step 4/7. It functions in the pathway metabolic intermediate biosynthesis; chorismate biosynthesis; chorismate from D-erythrose 4-phosphate and phosphoenolpyruvate: step 5/7. It participates in metabolic intermediate biosynthesis; chorismate biosynthesis; chorismate from D-erythrose 4-phosphate and phosphoenolpyruvate: step 6/7. Functionally, the AROM polypeptide catalyzes 5 consecutive enzymatic reactions in prechorismate polyaromatic amino acid biosynthesis. The chain is Pentafunctional AROM polypeptide from Saccharomyces cerevisiae (strain ATCC 204508 / S288c) (Baker's yeast).